Reading from the N-terminus, the 306-residue chain is UDP-3-O-acyl-N-acetylglucosamine deacetylase (306 aa).

The Zn(2+) site is built by histidine 79, histidine 238, and aspartate 242. The active-site Proton donor is histidine 265.

The protein belongs to the LpxC family. The cofactor is Zn(2+).

The catalysed reaction is a UDP-3-O-[(3R)-3-hydroxyacyl]-N-acetyl-alpha-D-glucosamine + H2O = a UDP-3-O-[(3R)-3-hydroxyacyl]-alpha-D-glucosamine + acetate. The protein operates within glycolipid biosynthesis; lipid IV(A) biosynthesis; lipid IV(A) from (3R)-3-hydroxytetradecanoyl-[acyl-carrier-protein] and UDP-N-acetyl-alpha-D-glucosamine: step 2/6. Functionally, catalyzes the hydrolysis of UDP-3-O-myristoyl-N-acetylglucosamine to form UDP-3-O-myristoylglucosamine and acetate, the committed step in lipid A biosynthesis. This is UDP-3-O-acyl-N-acetylglucosamine deacetylase from Yersinia pseudotuberculosis serotype O:1b (strain IP 31758).